Consider the following 153-residue polypeptide: DNA gyrase inhibitor (153 aa).

Belongs to the DNA gyrase inhibitor family. Interacts with DNA gyrase.

The protein resides in the cytoplasm. Inhibits the supercoiling activity of DNA gyrase. Acts by inhibiting DNA gyrase at an early step, prior to (or at the step of) binding of DNA by the gyrase. It protects cells against toxins that target DNA gyrase, by inhibiting activity of these toxins and reducing the formation of lethal double-strand breaks in the cell. The polypeptide is DNA gyrase inhibitor (Pantoea sp. (strain At-9b)).